We begin with the raw amino-acid sequence, 1735 residues long: Cadherin-AgCad1 (1735 aa).

Residues 1 to 30 (MKCVASKFNMWLHLGWLLGLLLVLLPLVRC) form the signal peptide. Topologically, residues 31–1574 (QGWGEPRFET…ALTEADETLQ (1544 aa)) are extracellular. The interval 166–1456 (VTDCLFNVYH…KVYIVSESNR (1291 aa)) is extracellular domain (EC). 11 Cadherin domains span residues 171–273 (FNVY…PPIF), 280–378 (ERIM…IPEI), 379–498 (YMKP…VPKF), 499–620 (GRDE…PPQI), 621–757 (TLPR…APYF), 767–866 (SVKE…QPYH), 879–983 (EKIP…TPKL), 985–1109 (ELAA…TPSI), 1136–1235 (GSPL…EPTF), 1255–1350 (AEDP…PPVF), and 1351–1461 (QQRL…TFVF). 2 consecutive short sequence motifs (toxin-binding receptor motif) follow at residues 1344-1350 (NDNPPVF) and 1446-1456 (AKVYIVSESNR). Residues 1358–1569 (GITTNDRVPK…PLATEALTEA (212 aa)) are CR11-MPED, increases toxicity of activated Cry4B toxin, peptide alone is not toxic. Residues 1457 to 1569 (VTFVFLNSVE…PLATEALTEA (113 aa)) are membrane-proximal EC domain (MPED). A helical transmembrane segment spans residues 1575 to 1595 (IILIVVSAALAVLCVILFVAF). The Cytoplasmic segment spans residues 1596 to 1735 (FIKIRSLNRQ…ETDDELSHRF (140 aa)). Positions 1701-1719 (SLNPMANGTDKSNDGAPTS) are enriched in polar residues. The interval 1701 to 1735 (SLNPMANGTDKSNDGAPTSNHKKLDETDDELSHRF) is disordered. Residues 1722–1735 (KKLDETDDELSHRF) are compositionally biased toward basic and acidic residues.

As to expression, larval midgut (at protein level).

It is found in the apical cell membrane. The protein localises to the cell projection. It localises to the microvillus membrane. Functionally, cadherins are calcium-dependent cell adhesion proteins. They preferentially interact with themselves in a homophilic manner in connecting cells. (Microbial infection) Binds to and is probably the functional receptor for B.thuringiensis subsp. israelensis (Bti) insecticidal toxin Cry4B. Trichoplusia ni insect cells stably transfected with this protein become suspectible to Cry4B; cells undergo oncosis, they bleb and ruffle after 20-40 minutes, swell after 40-60 minutes and lyse after 90 minutes. Following toxin treatment in the T.in insect system levels of intracellular 3',5'-cyclic AMP (cAMP) rise 12.5-fold; EDTA but not EGTA pretreatment prevents cAMP increase. Inorganic phosphate also rises 3.4-fold after toxin treatment. This is Cadherin-AgCad1 from Anopheles gambiae (African malaria mosquito).